The sequence spans 106 residues: Putative double-stranded DNA mimic protein VIBHAR_02752 (106 aa).

It belongs to the putative dsDNA mimic protein family.

Its function is as follows. May act as a double-stranded DNA (dsDNA) mimic. Probably regulates the activity of a dsDNA-binding protein. In Vibrio campbellii (strain ATCC BAA-1116), this protein is Putative double-stranded DNA mimic protein VIBHAR_02752.